A 637-amino-acid polypeptide reads, in one-letter code: Protein kinase domain-containing protein ppk3 (637 aa).

The Protein kinase domain maps to M1–I296. Residues K414–L450 form an HEAT repeat. Over residues N576–N586 the composition is skewed to basic and acidic residues. The segment at N576–L637 is disordered. Acidic residues predominate over residues E608–V631.

It is found in the golgi apparatus. The protein is Protein kinase domain-containing protein ppk3 (ppk3) of Schizosaccharomyces pombe (strain 972 / ATCC 24843) (Fission yeast).